The primary structure comprises 189 residues: PTS system glucose-specific EIIA component (189 aa).

In terms of domain architecture, PTS EIIA type-1 spans 31-135 (DEAFAEKIVG…SVITPVVIAN (105 aa)). Residues histidine 68 and histidine 83 each coordinate Zn(2+). Histidine 83 acts as the Tele-phosphohistidine intermediate; for EIIA activity in catalysis. Histidine 83 bears the Phosphohistidine; by HPr mark.

Heterodimer with glycerol kinase (glpk). The cofactor is Zn(2+).

The protein localises to the cytoplasm. The phosphoenolpyruvate-dependent sugar phosphotransferase system (sugar PTS), a major carbohydrate active transport system, catalyzes the phosphorylation of incoming sugar substrates concomitantly with their translocation across the cell membrane. The enzyme II complex composed of PtsG and Crr is involved in glucose transport. The protein is PTS system glucose-specific EIIA component (crr) of Borreliella burgdorferi (strain ATCC 35210 / DSM 4680 / CIP 102532 / B31) (Borrelia burgdorferi).